A 122-amino-acid chain; its full sequence is Large ribosomal subunit protein uL14 (122 aa).

It belongs to the universal ribosomal protein uL14 family. As to quaternary structure, part of the 50S ribosomal subunit. Forms a cluster with proteins L3 and L19. In the 70S ribosome, L14 and L19 interact and together make contacts with the 16S rRNA in bridges B5 and B8.

In terms of biological role, binds to 23S rRNA. Forms part of two intersubunit bridges in the 70S ribosome. This chain is Large ribosomal subunit protein uL14, found in Brucella anthropi (strain ATCC 49188 / DSM 6882 / CCUG 24695 / JCM 21032 / LMG 3331 / NBRC 15819 / NCTC 12168 / Alc 37) (Ochrobactrum anthropi).